The primary structure comprises 321 residues: Probable UDP-sugar transporter protein SLC35A4 (321 aa).

Topologically, residues 1–22 are cytoplasmic; sequence MYSVNIEPDGSNHSPSRKRLKQ. A helical transmembrane segment spans residues 23 to 43; sequence ILWGLMLVLSVTIYGSHAPLI. Residues 44–56 lie on the Lumenal side of the membrane; sequence YLCKVNGEIPFSS. Residues 57–77 traverse the membrane as a helical segment; the sequence is SAVVLLIELSKFVISLVFFLI. At 78–91 the chain is on the cytoplasmic side; that stretch reads QDWKSLKASVSWHL. A helical transmembrane segment spans residues 92-112; that stretch reads AAPYAVPAVLYGANNNLVVYI. Residues 113 to 119 are Lumenal-facing; it reads QHFMDPS. A helical transmembrane segment spans residues 120–140; sequence SFQVLSNLKIVSTAVLYSLFL. Residues 141–149 are Cytoplasmic-facing; it reads RQRLSVRRW. Residues 150–170 traverse the membrane as a helical segment; that stretch reads LSVFLLLAAGVFYSYGGIQDL. Residues 171-180 lie on the Lumenal side of the membrane; it reads EKVSSDTNLY. Residues 181–201 form a helical membrane-spanning segment; sequence VTLPGLLLMLAYCLISGLSAV. Over 202 to 211 the chain is Cytoplasmic; that stretch reads YTEMTLKTQK. A helical transmembrane segment spans residues 212-232; it reads IPLNMQNLYLYSFGIIINLTA. Over 233–247 the chain is Lumenal; that stretch reads HLTSSKNSDFFDGFS. The helical transmembrane segment at 248-268 threads the bilayer; the sequence is VWVWVIILSQALNGLIMSLVM. Topologically, residues 269-321 are cytoplasmic; the sequence is KLSNNITRLFIISFSMLANGFLSFILFQLQLTALFFLAVVLIGLAVYMYYGMK.

This sequence belongs to the nucleotide-sugar transporter family. SLC35A subfamily.

The protein resides in the golgi apparatus membrane. It catalyses the reaction CDP-L-ribitol(in) + CDP(out) = CDP-L-ribitol(out) + CDP(in). In terms of biological role, mediates the transport of CDP-ribitol. Does not exhibit CMP-sialic acid, UDP-galactose and UDP-N-acetylglucosamine transport activity. This is Probable UDP-sugar transporter protein SLC35A4 from Xenopus tropicalis (Western clawed frog).